Here is an 84-residue protein sequence, read N- to C-terminus: Apoptosis inhibitor Rv3654c (84 aa).

The signal sequence occupies residues 1–39 (MVARHRAQAAADLASLAAAARLPSGLAAACARATLVARA).

In terms of assembly, interacts with human polypyrimidine tract binding protein-associated splicing factor (PSF).

It is found in the secreted. It localises to the host cytoplasm. Functionally, effector protein that participates in the suppression of macrophage apoptosis by blocking the extrinsic pathway. Recognizes the host polypyrimidine tract binding protein-associated splicing factor (PSF), which probably leads to its cleavage, diminishing the level of caspase-8 in macrophages. This chain is Apoptosis inhibitor Rv3654c, found in Mycobacterium tuberculosis (strain ATCC 25618 / H37Rv).